The primary structure comprises 150 residues: Non-specific lipid transfer protein GPI-anchored 7 (150 aa).

Positions methionine 1 to alanine 25 are cleaved as a signal peptide. 4 disulfides stabilise this stretch: cysteine 29–cysteine 66, cysteine 36–cysteine 50, cysteine 51–cysteine 92, and cysteine 64–cysteine 101. Residues asparagine 41, asparagine 79, and asparagine 93 are each glycosylated (N-linked (GlcNAc...) asparagine). Positions alanine 103–aspartate 125 are disordered. Aspartate 125 is lipidated: GPI-anchor amidated aspartate. Positions alanine 126–phenylalanine 150 are cleaved as a propeptide — removed in mature form.

It belongs to the plant LTP family. As to expression, up-regulated in the epidermis of stems.

The protein localises to the cell membrane. Functionally, probable lipid transfer protein. This Arabidopsis thaliana (Mouse-ear cress) protein is Non-specific lipid transfer protein GPI-anchored 7.